The following is a 104-amino-acid chain: Holotricin-3 (104 aa).

A signal peptide spans Met-1 to Pro-20. Residues Gly-22–Tyr-104 form a disordered region. A compositionally biased stretch (gly residues) spans Pro-23–Gly-97. 18 tandem repeats follow at residues His-27–Gly-30, His-31–Gly-34, His-35–Gly-38, His-39–Gly-42, Gln-43–Gly-46, His-47–Gly-50, Pro-51–Gly-54, Phe-55–Gly-58, His-59–Gly-62, His-63–Gly-66, Gly-67–Gly-70, Gly-71–Gly-74, Gly-75–Ser-78, Pro-79–Gly-82, Ala-83–Gly-86, Tyr-87–Gly-90, His-91–Gly-94, and His-96–Gly-98. Positions His-27–Gly-98 are 18 X 4 AA approximate tandem repeats of H-G-G-G.

It to T.molitor tenecin 3.

The protein localises to the secreted. Functionally, has antifungal activity against C.albicans. The sequence is that of Holotricin-3 from Holotrichia diomphalia (Korean black chafer).